Consider the following 508-residue polypeptide: GMP synthase [glutamine-hydrolyzing] (508 aa).

A Glutamine amidotransferase type-1 domain is found at 1–189; it reads MILVLDFGSQ…ALLVCGCEKT (189 aa). Cys78 functions as the Nucleophile in the catalytic mechanism. Catalysis depends on residues His163 and Glu165. The 194-residue stretch at 190–383 folds into the GMPS ATP-PPase domain; the sequence is WGMQHFAQRE…LGVSQDFLMR (194 aa). 217–223 contributes to the ATP binding site; it reads SGGVDST.

As to quaternary structure, homodimer.

The enzyme catalyses XMP + L-glutamine + ATP + H2O = GMP + L-glutamate + AMP + diphosphate + 2 H(+). The protein operates within purine metabolism; GMP biosynthesis; GMP from XMP (L-Gln route): step 1/1. In terms of biological role, catalyzes the synthesis of GMP from XMP. This Helicobacter pylori (strain P12) protein is GMP synthase [glutamine-hydrolyzing].